Consider the following 394-residue polypeptide: L-lactate 2-monooxygenase (394 aa).

Positions 19–394 (VAPTLPMSYA…LTIDALRPTR (376 aa)) constitute an FMN hydroxy acid dehydrogenase domain. Residue tyrosine 45 participates in a 2-oxocarboxylate binding. Residues 98–100 (PIG), serine 129, and glutamine 151 each bind FMN. Position 153 (tyrosine 153) interacts with a 2-oxocarboxylate. Threonine 179 lines the FMN pocket. Position 188 (arginine 188) interacts with a 2-oxocarboxylate. Lysine 267 is an FMN binding site. The Proton acceptor role is filled by histidine 291. Arginine 294 is a binding site for a 2-oxocarboxylate. Residues 321–325 (DSGIR) and arginine 345 each bind FMN.

The protein belongs to the FMN-dependent alpha-hydroxy acid dehydrogenase family. In terms of assembly, homotetramer. It depends on FMN as a cofactor.

It carries out the reaction (S)-lactate + O2 = acetate + CO2 + H2O. Functionally, catalyzes the oxidative decarboxylation of (S)-lactate (L-lactate) to acetate and carbon dioxide. Its physiological role remains unknown. This is L-lactate 2-monooxygenase from Mycolicibacterium smegmatis (Mycobacterium smegmatis).